We begin with the raw amino-acid sequence, 273 residues long: Dermonecrotic toxin LdSicTox-alphaIB3avi (273 aa).

The active site involves H5. Residues E25 and D27 each coordinate Mg(2+). H41 acts as the Nucleophile in catalysis. Disulfide bonds link C45-C51 and C47-C190. D85 contributes to the Mg(2+) binding site.

It belongs to the arthropod phospholipase D family. Class II subfamily. It depends on Mg(2+) as a cofactor. Expressed by the venom gland.

The protein resides in the secreted. The catalysed reaction is an N-(acyl)-sphingosylphosphocholine = an N-(acyl)-sphingosyl-1,3-cyclic phosphate + choline. The enzyme catalyses an N-(acyl)-sphingosylphosphoethanolamine = an N-(acyl)-sphingosyl-1,3-cyclic phosphate + ethanolamine. It carries out the reaction a 1-acyl-sn-glycero-3-phosphocholine = a 1-acyl-sn-glycero-2,3-cyclic phosphate + choline. It catalyses the reaction a 1-acyl-sn-glycero-3-phosphoethanolamine = a 1-acyl-sn-glycero-2,3-cyclic phosphate + ethanolamine. Functionally, dermonecrotic toxins cleave the phosphodiester linkage between the phosphate and headgroup of certain phospholipids (sphingolipid and lysolipid substrates), forming an alcohol (often choline) and a cyclic phosphate. This toxin acts on sphingomyelin (SM). It may also act on ceramide phosphoethanolamine (CPE), lysophosphatidylcholine (LPC) and lysophosphatidylethanolamine (LPE), but not on lysophosphatidylserine (LPS), and lysophosphatidylglycerol (LPG). It acts by transphosphatidylation, releasing exclusively cyclic phosphate products as second products. Induces dermonecrosis, hemolysis, increased vascular permeability, edema, inflammatory response, and platelet aggregation. The sequence is that of Dermonecrotic toxin LdSicTox-alphaIB3avi from Loxosceles deserta (Desert recluse spider).